Here is a 1520-residue protein sequence, read N- to C-terminus: DNA topoisomerase 2 top-2 (1520 aa).

Residues 1–10 are compositionally biased toward acidic residues; it reads MSDSDSEFSI. The interval 1-40 is disordered; the sequence is MSDSDSEFSIEDSPKKKTAPKKEKASPKKKKDDANESMVM. Basic and acidic residues predominate over residues 12 to 34; the sequence is DSPKKKTAPKKEKASPKKKKDDA. ATP is bound by residues asparagine 126, asparagine 155, 183 to 185, 196 to 203, and 411 to 413; these read SSN, GRNGYGAK, and QTK. A Toprim domain is found at 490–607; the sequence is CTLILTEGDS…SLIQRNFVEE (118 aa). Positions 496, 576, and 578 each coordinate Mg(2+). Residues 750–1219 enclose the Topo IIA-type catalytic domain; sequence IPCLVDGFKP…TWQDLWHEDL (470 aa). Tyrosine 840 acts as the O-(5'-phospho-DNA)-tyrosine intermediate in catalysis. Positions 1249–1520 are disordered; it reads AADAKTGRGP…RGRVVDSDSD (272 aa). The span at 1283–1320 shows a compositional bias: basic and acidic residues; that stretch reads TKAKYEKMSQPKKERVKKEPKEPKEPKKVKKEGQDIKK. Residues 1342-1364 are compositionally biased toward acidic residues; it reads MSEESDVEFDEGIDFDSDDDGVE.

It belongs to the type II topoisomerase family. Homodimer. Interacts with nmad-1; the interaction is required for localization of top-2 to DNA. Interacts with gcna-1; this interaction allows the resolution of topoisomerase 2 DNA-protein cross-links. The cofactor is Mg(2+). Mn(2+) is required as a cofactor. Ca(2+) serves as cofactor. As to expression, expressed in the hermaphrodite and male germline.

Its subcellular location is the nucleus. The protein localises to the nucleoplasm. The protein resides in the chromosome. It localises to the cytoplasm. It is found in the cytoskeleton. Its subcellular location is the spindle. The catalysed reaction is ATP-dependent breakage, passage and rejoining of double-stranded DNA.. In terms of biological role, control of topological states of DNA by transient breakage and subsequent rejoining of DNA strands. Topoisomerase II makes double-strand breaks. Essential during mitosis in the adult germline and during embryogenesis for proper segregation of daughter chromosomes. Required for centromere resolution during mitosis. Required for chromosome segregation in anaphase of meiosis I during spermatogenesis. Promotes cleavage furrow stability during cytokinesis upon the presence of chromatin obstructions. Promotes DNA break formation upon zygotic genome activation in the Z2 and Z3 primordial germ cells in L1 larvae, thereby activating a checkpoint response. Essential for embryogenesis. The protein is DNA topoisomerase 2 top-2 of Caenorhabditis elegans.